Consider the following 420-residue polypeptide: MRSWLAPSVPKLAGAGPRLRLWDSADRIIRPVTPGRTATMYVCGITPYDATHLGHAATYLAFDLVHRLWLDAGHQVAYAQNITDVDDPLLERADRDHRDWQELAAEQIELFRTDMSALRVLPPHEYVGVTESVGLVVAMVEKLLANQSAYVVAEGEYPDVYHRIAATEDFGYVSGYGREEMAQVFRERGGDPDRPGKADPLDALLWRAARPGEPSWPSPFGPGRPGWHVECSAIALDRIGFGFDVQGGGSDLVFPHHEFSAAHAQAQHGAGAADEHRRFARNYVHAGMIGLDGEKMSKSLGNLVFVSALRERGVDPSAIRLALFAGHYRADRSWDQGLLREAQERLARWRHAASLASGPAAHDVVARMREHLANDLDTPKALAALDSWSLEAAAHGGGDQEAPALVARAADALLGVQLTP.

Position 43 (Cys43) interacts with Zn(2+). Residues Cys43 to Thr46, Thr58, and Asn81 to Thr83 each bind L-cysteinyl-5'-AMP. Residues Ile45–His55 carry the 'HIGH' region motif. The 'ERGGDP' region signature appears at Glu187–Pro192. Trp227 is an L-cysteinyl-5'-AMP binding site. Residue Cys231 participates in Zn(2+) binding. L-cysteinyl-5'-AMP is bound at residue Gly249–Asp251. Residue His256 participates in Zn(2+) binding. Ile289 is a binding site for L-cysteinyl-5'-AMP. A 'KMSKS' region motif is present at residues Lys295 to Ser299.

It belongs to the class-I aminoacyl-tRNA synthetase family. MshC subfamily. As to quaternary structure, monomer. Zn(2+) serves as cofactor.

It catalyses the reaction 1D-myo-inositol 2-amino-2-deoxy-alpha-D-glucopyranoside + L-cysteine + ATP = 1D-myo-inositol 2-(L-cysteinylamino)-2-deoxy-alpha-D-glucopyranoside + AMP + diphosphate + H(+). Catalyzes the ATP-dependent condensation of GlcN-Ins and L-cysteine to form L-Cys-GlcN-Ins. This chain is L-cysteine:1D-myo-inositol 2-amino-2-deoxy-alpha-D-glucopyranoside ligase, found in Segniliparus rotundus (strain ATCC BAA-972 / CDC 1076 / CIP 108378 / DSM 44985 / JCM 13578).